The primary structure comprises 204 residues: uncharacterized protein (204 aa).

6 helical membrane-spanning segments follow: residues 19–39, 42–62, 78–98, 116–136, 143–163, and 167–187; these read TANP…LLNL, AGLF…GGIA, GTVA…LLVI, PVAM…MFIA, GIQV…AGEI, and ALIT…AMYV.

Belongs to the acetate uptake transporter (AceTr) (TC 2.A.96) family.

It localises to the cell membrane. This is an uncharacterized protein from Methanothermobacter thermautotrophicus (strain ATCC 29096 / DSM 1053 / JCM 10044 / NBRC 100330 / Delta H) (Methanobacterium thermoautotrophicum).